Here is a 416-residue protein sequence, read N- to C-terminus: Gamma-glutamyl phosphate reductase (416 aa).

It belongs to the gamma-glutamyl phosphate reductase family.

It localises to the cytoplasm. The catalysed reaction is L-glutamate 5-semialdehyde + phosphate + NADP(+) = L-glutamyl 5-phosphate + NADPH + H(+). The protein operates within amino-acid biosynthesis; L-proline biosynthesis; L-glutamate 5-semialdehyde from L-glutamate: step 2/2. Functionally, catalyzes the NADPH-dependent reduction of L-glutamate 5-phosphate into L-glutamate 5-semialdehyde and phosphate. The product spontaneously undergoes cyclization to form 1-pyrroline-5-carboxylate. This chain is Gamma-glutamyl phosphate reductase, found in Streptococcus thermophilus.